Consider the following 1013-residue polypeptide: A-type ATP synthase subunit A (1013 aa).

Positions 392–525 constitute a DOD-type homing endonuclease domain; that stretch reads FLGYVIGDGT…LTYLLAKLGI (134 aa).

Belongs to the ATPase alpha/beta chains family. Has multiple subunits with at least A(3), B(3), C, D, E, F, H, I and proteolipid K(x). Post-translationally, this protein undergoes a protein self splicing that involves a post-translational excision of the VDE intervening region (intein) followed by peptide ligation.

It is found in the cell membrane. The enzyme catalyses ATP + H2O + 4 H(+)(in) = ADP + phosphate + 5 H(+)(out). In terms of biological role, component of the A-type ATP synthase that produces ATP from ADP in the presence of a proton gradient across the membrane. The A chain is the catalytic subunit. The polypeptide is A-type ATP synthase subunit A (Pyrococcus furiosus (strain ATCC 43587 / DSM 3638 / JCM 8422 / Vc1)).